Here is a 517-residue protein sequence, read N- to C-terminus: General transcription factor IIF subunit 1 (517 aa).

Ala-2 carries the post-translational modification N-acetylalanine. Thr-156 is subject to Phosphothreonine. The segment at 178 to 466 (QQRRLKDQDQ…DAVRRYLTRK (289 aa)) is disordered. Phosphoserine occurs at positions 217, 218, 221, and 224. Positions 232-251 (PKAKKKAPLAKGGRKKKKKK) are enriched in basic residues. Composition is skewed to acidic residues over residues 255 to 270 (DEAF…EGQE) and 303 to 325 (EQSD…EEEE). At Thr-331 the chain carries Phosphothreonine. Acidic residues predominate over residues 343–355 (EESDSSEESDIDS). Basic residues predominate over residues 364 to 374 (AKKKTPPKRER). Phosphoserine is present on residues Ser-377, Ser-380, Ser-381, and Ser-385. The segment covering 377–391 (SGGSSRGNSRPGTPS) has biased composition (low complexity). Thr-389 is subject to Phosphothreonine. Ser-391 is modified (phosphoserine). Lys-407 is modified (N6-acetyllysine). A compositionally biased stretch (polar residues) spans 428 to 452 (GPQSLSGKSTPQPPSGKTTPNSGDV). Phosphoserine is present on residues Ser-431, Ser-433, and Ser-436. 2 positions are modified to phosphothreonine: Thr-437 and Thr-446. A Phosphoserine modification is found at Ser-449. 3 residues coordinate Zn(2+): Glu-503, His-512, and Glu-517.

This sequence belongs to the TFIIF alpha subunit family. In terms of assembly, heterodimer of an alpha and a beta subunit. Interacts with GTF2F2, CTDP1, TAF6/TAFII80 and URI1. Interacts with GTF2B (via C-terminus and preferentially via acetylated form); this interaction prevents binding of GTF2B to GTF2F2. Part of TBP-based Pol II pre-initiation complex (PIC), in which Pol II core assembles with general transcription factors and other specific initiation factors including GTF2E1, GTF2E2, GTF2F1, GTF2F2, TCEA1, ERCC2, ERCC3, GTF2H2, GTF2H3, GTF2H4, GTF2H5, GTF2A1, GTF2A2, GTF2B and TBP; this large multi-subunit PIC complex mediates DNA unwinding and targets Pol II core to the transcription start site where the first phosphodiester bond forms. Post-translationally, phosphorylated on Ser and other residues by TAF1 and casein kinase II-like kinases.

The protein localises to the nucleus. Functionally, TFIIF is a general transcription initiation factor that binds to RNA polymerase II and helps to recruit it to the initiation complex in collaboration with TFIIB. It promotes transcription elongation. The protein is General transcription factor IIF subunit 1 (GTF2F1) of Homo sapiens (Human).